The primary structure comprises 441 residues: Ribosomal protein uS12 methylthiotransferase RimO (441 aa).

Residues 8 to 118 form the MTTase N-terminal domain; it reads PKIGFVSLGC…VLEHVHHYVP (111 aa). Residues cysteine 17, cysteine 53, cysteine 82, cysteine 150, cysteine 154, and cysteine 157 each contribute to the [4Fe-4S] cluster site. One can recognise a Radical SAM core domain in the interval 136–373; the sequence is LTPRHYAYLK…MQLQQQISAE (238 aa). Residues 376–441 form the TRAM domain; that stretch reads QEKVGREILV…DEYDLWGSRV (66 aa).

It belongs to the methylthiotransferase family. RimO subfamily. The cofactor is [4Fe-4S] cluster.

Its subcellular location is the cytoplasm. It carries out the reaction L-aspartate(89)-[ribosomal protein uS12]-hydrogen + (sulfur carrier)-SH + AH2 + 2 S-adenosyl-L-methionine = 3-methylsulfanyl-L-aspartate(89)-[ribosomal protein uS12]-hydrogen + (sulfur carrier)-H + 5'-deoxyadenosine + L-methionine + A + S-adenosyl-L-homocysteine + 2 H(+). Functionally, catalyzes the methylthiolation of an aspartic acid residue of ribosomal protein uS12. This chain is Ribosomal protein uS12 methylthiotransferase RimO, found in Shigella sonnei (strain Ss046).